A 142-amino-acid chain; its full sequence is Hemoglobin subunit alpha (142 aa).

The Globin domain occupies 2-142 (VLSPADKSNV…VSTVLTSKYR (141 aa)). A Phosphoserine modification is found at serine 4. N6-succinyllysine is present on residues lysine 8 and lysine 12. Lysine 17 carries the N6-acetyllysine; alternate modification. Lysine 17 carries the N6-succinyllysine; alternate modification. Tyrosine 25 carries the phosphotyrosine modification. Serine 36 is subject to Phosphoserine. N6-succinyllysine is present on lysine 41. Serine 50 is subject to Phosphoserine. O2 is bound at residue histidine 59. Histidine 88 provides a ligand contact to heme b. At serine 103 the chain carries Phosphoserine. Threonine 109 carries the phosphothreonine modification. Serine 125 bears the Phosphoserine mark. Residues threonine 135 and threonine 138 each carry the phosphothreonine modification. Position 139 is a phosphoserine (serine 139).

The protein belongs to the globin family. As to quaternary structure, heterotetramer of two alpha chains and two beta chains. Red blood cells.

Its function is as follows. Involved in oxygen transport from the lung to the various peripheral tissues. Hemopressin acts as an antagonist peptide of the cannabinoid receptor CNR1. Hemopressin-binding efficiently blocks cannabinoid receptor CNR1 and subsequent signaling. The protein is Hemoglobin subunit alpha (HBA) of Ursus maritimus (Polar bear).